Consider the following 336-residue polypeptide: tRNA-dihydrouridine(20/20a) synthase (336 aa).

FMN contacts are provided by residues 24-26 and Gln-77; that span reads PMM. The active-site Proton donor is the Cys-107. FMN contacts are provided by residues Lys-146, His-178, 218 to 220, and 240 to 241; these read NGG and GR.

Belongs to the Dus family. DusA subfamily. FMN is required as a cofactor.

The catalysed reaction is 5,6-dihydrouridine(20) in tRNA + NADP(+) = uridine(20) in tRNA + NADPH + H(+). It carries out the reaction 5,6-dihydrouridine(20) in tRNA + NAD(+) = uridine(20) in tRNA + NADH + H(+). The enzyme catalyses 5,6-dihydrouridine(20a) in tRNA + NADP(+) = uridine(20a) in tRNA + NADPH + H(+). It catalyses the reaction 5,6-dihydrouridine(20a) in tRNA + NAD(+) = uridine(20a) in tRNA + NADH + H(+). Functionally, catalyzes the synthesis of 5,6-dihydrouridine (D), a modified base found in the D-loop of most tRNAs, via the reduction of the C5-C6 double bond in target uridines. Specifically modifies U20 and U20a in tRNAs. The sequence is that of tRNA-dihydrouridine(20/20a) synthase from Pseudomonas putida (strain ATCC 47054 / DSM 6125 / CFBP 8728 / NCIMB 11950 / KT2440).